Consider the following 195-residue polypeptide: Cytochrome c biogenesis ATP-binding export protein CcmA (195 aa).

Residues 1–195 (MLSLHQLQFN…IKSAQILQLV (195 aa)) enclose the ABC transporter domain. ATP is bound at residue 33–40 (GANGSGKS).

The protein belongs to the ABC transporter superfamily. CcmA exporter (TC 3.A.1.107) family. In terms of assembly, the complex is composed of two ATP-binding proteins (CcmA) and two transmembrane proteins (CcmB).

The protein resides in the cell inner membrane. It carries out the reaction heme b(in) + ATP + H2O = heme b(out) + ADP + phosphate + H(+). Its function is as follows. Part of the ABC transporter complex CcmAB involved in the biogenesis of c-type cytochromes; once thought to export heme, this seems not to be the case, but its exact role is uncertain. Responsible for energy coupling to the transport system. This chain is Cytochrome c biogenesis ATP-binding export protein CcmA, found in Rickettsia felis (strain ATCC VR-1525 / URRWXCal2) (Rickettsia azadi).